The primary structure comprises 427 residues: MEKHGNYDIKKICVIGLGYIGLPTASMLANHGYEVVGVDVNEKRVNHIKNGELKIEEPGLLTLVKGAINSKNLNVQTSAEEADAFIICVPTPALENEDGSKKCDLTYVMSAVQAIIPFLKDGNLIVVESTIPPETTKKIYETINKKIYVAHCPERVLPGKILKELVENDRIIGGINKKSAEMAKEIYKSFVEGKIYITDSNTAEMVKLMENTYRDINIALANEFAKICDEIGVNVWDAIKIANKHPRVNILNPGPGVGGHCISIDPWFIVEKTNNAKFIRAARELNDNMPAYVCKSVLSELNKLGIEKPKISIFGATYKGNVEDTRESPSKNVIKMLLENGATVSTFDPHADCFEYPLSTLDECISGSDCIVVLTDHDAFKNIKKDDIDEICPKLKNKIVFDTKNILEHNLWKKAGFKVKLLGNGAW.

NAD(+)-binding residues include Tyr19, Ile20, Asp39, Arg44, Thr91, and Thr130. UDP-N-acetyl-alpha-D-mannosaminouronate-binding residues include Arg155, Val156, Lys207, Asn211, Arg214, His245, Arg247, and Gly258. Catalysis depends on Lys207, which acts as the Proton donor/acceptor. Catalysis depends on Cys261, which acts as the Nucleophile. UDP-N-acetyl-alpha-D-mannosaminouronate-binding residues include Tyr318 and Lys319. Arg326 lines the NAD(+) pocket. Lys404 contacts UDP-N-acetyl-alpha-D-mannosaminouronate.

Belongs to the UDP-glucose/GDP-mannose dehydrogenase family. Homotetramer; probably dimer of dimers.

It carries out the reaction UDP-N-acetyl-alpha-D-mannosamine + 2 NAD(+) + H2O = UDP-N-acetyl-alpha-D-mannosaminouronate + 2 NADH + 3 H(+). Its function is as follows. Catalyzes the four-electron oxidation of UDP-N-acetyl-D-mannosamine (UDP-ManNAc), reducing NAD(+) and releasing UDP-N-acetylmannosaminuronic acid (UDP-ManNAcA). The polypeptide is UDP-N-acetyl-D-mannosamine dehydrogenase (wecC) (Methanococcus maripaludis (strain C7 / ATCC BAA-1331)).